The following is an 84-amino-acid chain: Small ribosomal subunit protein bS16 (84 aa).

Belongs to the bacterial ribosomal protein bS16 family.

The protein is Small ribosomal subunit protein bS16 of Endomicrobium trichonymphae.